A 225-amino-acid polypeptide reads, in one-letter code: Platelet-derived growth factor subunit B (225 aa).

The N-terminal stretch at 1–12 is a signal peptide; it reads LPLCCYLRLVSA. Residues 13 to 73 constitute a propeptide, removed in mature form; it reads EGDPIPEELY…ESESSSRGRR (61 aa). N-linked (GlcNAc...) asparagine glycosylation occurs at N55. 3 disulfides stabilise this stretch: C89–C133, C122–C170, and C126–C172. A propeptide spans 183-225 (removed in mature form); the sequence is RSPGTSREHRAKTPQTRVTVRTVRIRRPPKGKHRKFKHTHDKK.

The protein belongs to the PDGF/VEGF growth factor family. As to quaternary structure, antiparallel homodimer; disulfide-linked. Antiparallel heterodimer with PDGFA; disulfide-linked. The PDGFB homodimer interacts with PDGFRA and PDGFRB homodimers, and with heterodimers formed by PDGFRA and PDGFRB. The heterodimer composed of PDGFA and PDGFB interacts with PDGFRB homodimers, and with heterodimers formed by PDGFRA and PDGFRB. Interacts with XLKD1. Interacts with LRP1. Interacts with SORL1 (via the N-terminal ectodomain). Interacts with CD82; this interaction inhibits PDGFB-mediated signaling pathway. In terms of tissue distribution, expressed in a distinct subpopulation of smooth muscle cells in injured arteries.

It localises to the secreted. Growth factor that plays an essential role in the regulation of embryonic development, cell proliferation, cell migration, survival and chemotaxis. Potent mitogen for cells of mesenchymal origin. Required for normal proliferation and recruitment of pericytes and vascular smooth muscle cells in the central nervous system, skin, lung, heart and placenta. Required for normal blood vessel development, and for normal development of kidney glomeruli. Plays an important role in wound healing. Signaling is modulated by the formation of heterodimers with PDGFA. The protein is Platelet-derived growth factor subunit B (Pdgfb) of Rattus norvegicus (Rat).